The primary structure comprises 136 residues: Protein NrdI (136 aa).

The protein belongs to the NrdI family.

In terms of biological role, probably involved in ribonucleotide reductase function. The sequence is that of Protein NrdI from Escherichia coli O127:H6 (strain E2348/69 / EPEC).